A 497-amino-acid chain; its full sequence is C4-dicarboxylate transport protein (497 aa).

8 consecutive transmembrane segments (helical) span residues 27-45 (LYVQ…GYFY), 60-82 (IMLV…IAGM), 95-117 (AMIY…ANVV), 168-185 (ILQV…LAIV), 205-227 (RLVA…FTIG), 237-259 (LAML…LGAV), 348-370 (ILLL…AGFI), and 374-393 (ATLS…ILGI). The tract at residues 466 to 497 (ADRTLAGRPGGRDSRRIAPDHSAQVFGGPLSL) is disordered. The span at 475 to 484 (GGRDSRRIAP) shows a compositional bias: basic and acidic residues.

This sequence belongs to the dicarboxylate/amino acid:cation symporter (DAACS) (TC 2.A.23) family.

It is found in the cell inner membrane. In terms of biological role, responsible for the transport of dicarboxylates such as succinate, fumarate, and malate from the periplasm across the inner membrane. This transport system plays an essential role in the energy supply of tropical rhizobium-legume symbionts. The chain is C4-dicarboxylate transport protein (dctA1) from Sinorhizobium fredii (strain NBRC 101917 / NGR234).